We begin with the raw amino-acid sequence, 91 residues long: MARVTVQDAVEKIGNRFDLVLVAARRARQIQTGGKDPLVPEENDKYTVIALREIEEGLINNQILDVRDRQEQQEQEAAEIQAVTAIAEGRR.

Belongs to the RNA polymerase subunit omega family. As to quaternary structure, the RNAP catalytic core consists of 2 alpha, 1 beta, 1 beta' and 1 omega subunit. When a sigma factor is associated with the core the holoenzyme is formed, which can initiate transcription.

The catalysed reaction is RNA(n) + a ribonucleoside 5'-triphosphate = RNA(n+1) + diphosphate. Its function is as follows. Promotes RNA polymerase assembly. Latches the N- and C-terminal regions of the beta' subunit thereby facilitating its interaction with the beta and alpha subunits. The chain is DNA-directed RNA polymerase subunit omega from Pectobacterium carotovorum subsp. carotovorum (strain PC1).